The chain runs to 493 residues: Cysteine--tRNA ligase (493 aa).

Zn(2+) is bound at residue cysteine 29. The short motif at 31–41 (VTVYDLSHIGH) is the 'HIGH' region element. Zn(2+) is bound by residues cysteine 209, histidine 234, and glutamate 238. A 'KMSKS' region motif is present at residues 266–270 (KMSKS). Lysine 269 lines the ATP pocket.

It belongs to the class-I aminoacyl-tRNA synthetase family. Monomer. Zn(2+) serves as cofactor.

It is found in the cytoplasm. The enzyme catalyses tRNA(Cys) + L-cysteine + ATP = L-cysteinyl-tRNA(Cys) + AMP + diphosphate. This chain is Cysteine--tRNA ligase, found in Syntrophobacter fumaroxidans (strain DSM 10017 / MPOB).